The chain runs to 1363 residues: Neurexin-1 (1363 aa).

At 1-1287 (SKRRDMTVFS…EVIRESSSTT (1287 aa)) the chain is on the extracellular side. N-linked (GlcNAc...) asparagine glycosylation is present at asparagine 49. The EGF-like 1 domain maps to 67-105 (QSRLCAREDVCLNGGVCSVLNDQAVCDCSQTGFRGKDCS). Intrachain disulfides connect cysteine 71–cysteine 83, cysteine 77–cysteine 92, and cysteine 94–cysteine 104. 2 consecutive Laminin G-like domains span residues 132 to 329 (IATF…AFKC) and 336 to 528 (DPIT…KPSC). Aspartate 178, leucine 195, and methionine 263 together coordinate Ca(2+). Intrachain disulfides connect cysteine 293–cysteine 329, cysteine 499–cysteine 528, cysteine 536–cysteine 547, cysteine 541–cysteine 556, and cysteine 558–cysteine 568. Residues 532-569 (TAKPCLSNPCKNNGVCRDGWNRYVCDCSGTGYLGRSCE) enclose the EGF-like 2 domain. 2 Laminin G-like domains span residues 574–747 (ILSY…IDYC) and 761–936 (DPVT…ERGC). N-linked (GlcNAc...) asparagine glycosylation is present at asparagine 646. 4 disulfide bridges follow: cysteine 908–cysteine 936, cysteine 943–cysteine 954, cysteine 948–cysteine 963, and cysteine 965–cysteine 975. The 38-residue stretch at 939-976 (PSTTCQEDSCANQGVCLQQWDGFSCDCSMTSFSGPLCN) folds into the EGF-like 3 domain. The Laminin G-like 5 domain maps to 982-1180 (YIFSKGGGQI…DANIVIEGNV (199 aa)). Residue asparagine 1079 is glycosylated (N-linked (GlcNAc...) asparagine). The tract at residues 1244 to 1280 (CPSDDEDIDPCEPSSGGLANPTRAGGGREYPGSSEVI) is disordered. Residues 1288-1308 (GMVVGIVAAAALCILILLYAM) form a helical membrane-spanning segment. At 1309 to 1363 (YKYRNRDEGSYHVDESRNYISNSAQSNGAVIKEKQPNSAKSSNKNKKNKDKEYYV) the chain is on the cytoplasmic side. The segment at 1330 to 1363 (NSAQSNGAVIKEKQPNSAKSSNKNKKNKDKEYYV) is disordered.

This sequence belongs to the neurexin family. The cytoplasmic C-terminal region binds to CASK. The laminin G-like domain 1 binds to NXPH1. Specific isoforms bind to alpha-dystroglycan and to alpha-latrotoxin. Post-translationally, N- and O-glycosylated.

The protein resides in the membrane. Neuronal cell surface protein that may be involved in cell recognition and cell adhesion. May mediate intracellular signaling. The protein is Neurexin-1 (NRXN1) of Gallus gallus (Chicken).